A 400-amino-acid chain; its full sequence is Coenzyme A biosynthesis bifunctional protein CoaBC (400 aa).

A phosphopantothenoylcysteine decarboxylase region spans residues 1–190 (MKLNGKHIVV…SQKQDLQGLN (190 aa)). Residue C158 is the Proton donor of the active site. A phosphopantothenate--cysteine ligase region spans residues 191-400 (VSITAGPTRE…EIIERYQKTL (210 aa)). Residues 273–275 (GCA), D279, K289, 305–308 (PDII), F324, K338, and K342 contribute to the CTP site.

It in the N-terminal section; belongs to the HFCD (homo-oligomeric flavin containing Cys decarboxylase) superfamily. In the C-terminal section; belongs to the PPC synthetase family. Mg(2+) is required as a cofactor. It depends on FMN as a cofactor.

It carries out the reaction N-[(R)-4-phosphopantothenoyl]-L-cysteine + H(+) = (R)-4'-phosphopantetheine + CO2. It catalyses the reaction (R)-4'-phosphopantothenate + L-cysteine + CTP = N-[(R)-4-phosphopantothenoyl]-L-cysteine + CMP + diphosphate + H(+). It functions in the pathway cofactor biosynthesis; coenzyme A biosynthesis; CoA from (R)-pantothenate: step 2/5. It participates in cofactor biosynthesis; coenzyme A biosynthesis; CoA from (R)-pantothenate: step 3/5. In terms of biological role, catalyzes two sequential steps in the biosynthesis of coenzyme A. In the first step cysteine is conjugated to 4'-phosphopantothenate to form 4-phosphopantothenoylcysteine. In the second step the latter compound is decarboxylated to form 4'-phosphopantotheine. In Haemophilus influenzae (strain ATCC 51907 / DSM 11121 / KW20 / Rd), this protein is Coenzyme A biosynthesis bifunctional protein CoaBC.